Reading from the N-terminus, the 143-residue chain is Large ribosomal subunit protein uL11 (143 aa).

Belongs to the universal ribosomal protein uL11 family. Part of the ribosomal stalk of the 50S ribosomal subunit. Interacts with L10 and the large rRNA to form the base of the stalk. L10 forms an elongated spine to which L12 dimers bind in a sequential fashion forming a multimeric L10(L12)X complex. Post-translationally, one or more lysine residues are methylated.

Forms part of the ribosomal stalk which helps the ribosome interact with GTP-bound translation factors. The polypeptide is Large ribosomal subunit protein uL11 (Thiobacillus denitrificans (strain ATCC 25259 / T1)).